The sequence spans 677 residues: DNA ligase (677 aa).

Residues 34-38 (DAQYD), 84-85 (SL), and glutamate 118 each bind NAD(+). Lysine 120 functions as the N6-AMP-lysine intermediate in the catalytic mechanism. NAD(+) contacts are provided by arginine 141, glutamate 176, lysine 283, and lysine 307. Residues cysteine 403, cysteine 406, cysteine 421, and cysteine 427 each contribute to the Zn(2+) site. The 84-residue stretch at 594 to 677 (ETASPISGKT…DLLKTVSNSE (84 aa)) folds into the BRCT domain.

It belongs to the NAD-dependent DNA ligase family. LigA subfamily. The cofactor is Mg(2+). Mn(2+) is required as a cofactor.

The catalysed reaction is NAD(+) + (deoxyribonucleotide)n-3'-hydroxyl + 5'-phospho-(deoxyribonucleotide)m = (deoxyribonucleotide)n+m + AMP + beta-nicotinamide D-nucleotide.. DNA ligase that catalyzes the formation of phosphodiester linkages between 5'-phosphoryl and 3'-hydroxyl groups in double-stranded DNA using NAD as a coenzyme and as the energy source for the reaction. It is essential for DNA replication and repair of damaged DNA. In Anaplasma phagocytophilum (strain HZ), this protein is DNA ligase.